Consider the following 376-residue polypeptide: Erythronate-4-phosphate dehydrogenase (376 aa).

The substrate site is built by Ser-45 and Thr-67. Residue Asp-147 participates in NAD(+) binding. Arg-209 is an active-site residue. An NAD(+)-binding site is contributed by Asp-233. Glu-238 is a catalytic residue. The active-site Proton donor is His-255. Gly-258 is an NAD(+) binding site. A substrate-binding site is contributed by Tyr-259.

It belongs to the D-isomer specific 2-hydroxyacid dehydrogenase family. PdxB subfamily. In terms of assembly, homodimer.

Its subcellular location is the cytoplasm. The enzyme catalyses 4-phospho-D-erythronate + NAD(+) = (R)-3-hydroxy-2-oxo-4-phosphooxybutanoate + NADH + H(+). It functions in the pathway cofactor biosynthesis; pyridoxine 5'-phosphate biosynthesis; pyridoxine 5'-phosphate from D-erythrose 4-phosphate: step 2/5. Its function is as follows. Catalyzes the oxidation of erythronate-4-phosphate to 3-hydroxy-2-oxo-4-phosphonooxybutanoate. The protein is Erythronate-4-phosphate dehydrogenase of Shewanella sp. (strain MR-4).